A 1072-amino-acid polypeptide reads, in one-letter code: DNA-directed RNA polymerase subunit beta (1072 aa).

This sequence belongs to the RNA polymerase beta chain family. As to quaternary structure, in plastids the minimal PEP RNA polymerase catalytic core is composed of four subunits: alpha, beta, beta', and beta''. When a (nuclear-encoded) sigma factor is associated with the core the holoenzyme is formed, which can initiate transcription.

It is found in the plastid. It localises to the chloroplast. It carries out the reaction RNA(n) + a ribonucleoside 5'-triphosphate = RNA(n+1) + diphosphate. In terms of biological role, DNA-dependent RNA polymerase catalyzes the transcription of DNA into RNA using the four ribonucleoside triphosphates as substrates. The chain is DNA-directed RNA polymerase subunit beta from Draba nemorosa (Woodland whitlowgrass).